Reading from the N-terminus, the 373-residue chain is Anhydro-N-acetylmuramic acid kinase (373 aa).

An ATP-binding site is contributed by 13–20 (GTSMDGID).

It belongs to the anhydro-N-acetylmuramic acid kinase family.

The enzyme catalyses 1,6-anhydro-N-acetyl-beta-muramate + ATP + H2O = N-acetyl-D-muramate 6-phosphate + ADP + H(+). It participates in amino-sugar metabolism; 1,6-anhydro-N-acetylmuramate degradation. The protein operates within cell wall biogenesis; peptidoglycan recycling. Functionally, catalyzes the specific phosphorylation of 1,6-anhydro-N-acetylmuramic acid (anhMurNAc) with the simultaneous cleavage of the 1,6-anhydro ring, generating MurNAc-6-P. Is required for the utilization of anhMurNAc either imported from the medium or derived from its own cell wall murein, and thus plays a role in cell wall recycling. In Agrobacterium fabrum (strain C58 / ATCC 33970) (Agrobacterium tumefaciens (strain C58)), this protein is Anhydro-N-acetylmuramic acid kinase.